The following is a 629-amino-acid chain: tRNA uridine 5-carboxymethylaminomethyl modification enzyme MnmG (629 aa).

FAD is bound at residue G13–G18. G273–F287 contributes to the NAD(+) binding site.

The protein belongs to the MnmG family. In terms of assembly, homodimer. Heterotetramer of two MnmE and two MnmG subunits. The cofactor is FAD.

It is found in the cytoplasm. NAD-binding protein involved in the addition of a carboxymethylaminomethyl (cmnm) group at the wobble position (U34) of certain tRNAs, forming tRNA-cmnm(5)s(2)U34. In Aeromonas hydrophila subsp. hydrophila (strain ATCC 7966 / DSM 30187 / BCRC 13018 / CCUG 14551 / JCM 1027 / KCTC 2358 / NCIMB 9240 / NCTC 8049), this protein is tRNA uridine 5-carboxymethylaminomethyl modification enzyme MnmG.